A 362-amino-acid chain; its full sequence is Alpha-2-HS-glycoprotein (362 aa).

An N-terminal signal peptide occupies residues 1 to 15; that stretch reads LILFFCLAQLWGCRA. Positions 24–130 constitute a Cystatin fetuin-A-type 1 domain; sequence YREPACDDVE…QFSVLFAKCD (107 aa). Intrachain disulfides connect Cys-29–Cys-353, Cys-86–Cys-97, Cys-111–Cys-129, Cys-143–Cys-146, Cys-205–Cys-216, and Cys-227–Cys-244. Asn-96 carries an N-linked (GlcNAc...) asparagine glycan. A phosphoserine mark is found at Ser-131, Ser-132, and Ser-135. A Cystatin fetuin-A-type 2 domain is found at 141–252; that stretch reads KVCPNCPLLA…TCTVFQTQPV (112 aa). Asn-153 and Asn-173 each carry an N-linked (GlcNAc...) asparagine glycan. A phosphoserine mark is found at Ser-314, Ser-318, Ser-321, and Ser-323. Thr-332 carries O-linked (GalNAc...) threonine glycosylation.

The protein belongs to the fetuin family. Phosphorylated by FAM20C in the extracellular medium. In terms of tissue distribution, expressed by the liver and secreted in plasma.

The protein localises to the secreted. The polypeptide is Alpha-2-HS-glycoprotein (AHSG) (Sus scrofa (Pig)).